Reading from the N-terminus, the 626-residue chain is Leucine-rich repeat and fibronectin type-III domain-containing protein 3 (626 aa).

Residues 1–16 form the signal peptide; sequence MAVLPLLLCLLPLAPA. Residues 17–539 are Extracellular-facing; that stretch reads SSPPQPATSS…PHAPFLGGTM (523 aa). Residues 19–59 enclose the LRRNT domain; it reads PPQPATSSPCPRRCRCQTQSLPLSVLCPGAGLLFVPPSLDR. LRR repeat units follow at residues 84-105, 108-129, 132-153, 157-178, 181-202, and 205-226; these read GLLH…AFAD, ALRA…QLRG, NLRH…ALDD, TLED…ALGR, NVNT…AFSR, and KLAR…PLFS. In terms of domain architecture, LRRCT spans 249–295; it reads NPLHCNCELVWLRRLAREDDLEACASPPALGGRYFWAVGEEEFVCEP. Residues 295–382 enclose the Ig-like domain; sequence PPVVTHRSPP…GEATAAVELT (88 aa). The Fibronectin type-III 1 domain maps to 308–395; it reads PAGRPAALRC…PPPPQLANST (88 aa). An intrachain disulfide couples Cys317 to Cys366. Residues Asn339, Asn348, and Asn393 are each glycosylated (N-linked (GlcNAc...) asparagine). Residues 382 to 423 form a disordered region; the sequence is TVGPPPPPQLANSTSCDPPRDGEPDALTPPSAASASAKVADT. Positions 406–423 are enriched in low complexity; sequence DALTPPSAASASAKVADT. Positions 425–523 constitute a Fibronectin type-III 2 domain; the sequence is APTDRGVQVT…GCARFSTEPA (99 aa). Residues 540 to 560 form a helical membrane-spanning segment; it reads IIALGGVIVASVLVFIFVLLL. The Cytoplasmic segment spans residues 561 to 626; it reads RYKVHGVQPP…WGPSHEPAGP (66 aa).

The protein belongs to the LRFN family. In terms of assembly, can form heteromeric complexes with LRFN1, LRFN2, LRFN4 and LRFN5. Able to form homomeric complexes across cell junctions, between adjacent cells. Does not interact with DLG4. N-glycosylated. Expressed in brain. Within brain, expressed in hippocampus, cerebellum, olfactory bulb and forebrain (at protein level).

It is found in the cell membrane. The protein localises to the cell projection. The protein resides in the axon. Its subcellular location is the dendrite. It localises to the synapse. It is found in the presynaptic cell membrane. The protein localises to the postsynaptic cell membrane. Functionally, cell adhesion molecule that mediates homophilic cell-cell adhesion in a Ca(2+)-independent manner. Promotes neurite outgrowth in hippocampal neurons. The sequence is that of Leucine-rich repeat and fibronectin type-III domain-containing protein 3 from Rattus norvegicus (Rat).